Here is a 914-residue protein sequence, read N- to C-terminus: MDKKNDHKNNLIPQPASSFASSQERPTPMMEQYIEIKAVHHDSLLFYRMGDFYELFFNDAIEAAQALGITLTARGKHLGQDIPMCGVPVHAADDYLQKLIACGYRVAVCEQTEDPAEAKKRGSKSVVRRDVVRLVTPGTITEEKLLDPTRANYLMTLSRIKTSDGEDFALSWIDISTGIFRVTESRQEKLLADIMRVDPQEIIVADAFFHDKSHKSLFNVLDHIVSPQPACLFDTLTAERDICTYFKLSTLEGVADYSRCELSAIVAAIRYIEKTQITHRPPLMQPERQNESATLFIDAATRLSLELIRTTSGQRDGSLLKAIDRTVTGGGSRLLIDRLIAPLTTPSAIDTRLDSIDFFLRNPSLAEAIKLVLKGGPDMPRAVSRLALGRGGPRDMATIQRGFEIIRELNQILNNELLPQEISDVQQIFSNLPVSLHCHLEQALADDLPLLKRDGGFIRSNYHKELDEMRALRDESRRVIAELQAQYAQETDIKTLKIKHNNILGYFIEITSTQASGLTNNPQAKARFIHRQTMANAMRFTTTELADLESRIAHAANHALTLELEIFDTLVQEIIEQVEFIRKAAEALAILDVSVALAYLAEEQGYCRPKIDHSLTFHITAGRHPVVEQALRKQAAEPFVANDCDLSVQENQQYAAIWLLTGPNMGGKSTFLRQNALIAIMAQMGSFVPATSAHIGVVDRLFSRVGASDDLARGRSTFMMEMVETATILNHASHHSLVILDEIGRGTSTFDGLSIAWAAVEYLHEVNHCRAILATHFHEMTALTEKLDRLHNVTMKVKNWDGDVVFLHEVTPGAADRSYGVQVAKLAGLPPAVITRATDVLHQLEQGEMAGKGHKLIDDLPLFSLKATSSLNEEKNKHDALHEALKNIHPDELSPKQALEAIYHLKQLEKNNGL.

The interval 1-25 (MDKKNDHKNNLIPQPASSFASSQER) is disordered. Over residues 11–25 (LIPQPASSFASSQER) the composition is skewed to polar residues. 662–669 (GPNMGGKS) lines the ATP pocket.

This sequence belongs to the DNA mismatch repair MutS family.

Its function is as follows. This protein is involved in the repair of mismatches in DNA. It is possible that it carries out the mismatch recognition step. This protein has a weak ATPase activity. This is DNA mismatch repair protein MutS from Bartonella tribocorum (strain CIP 105476 / IBS 506).